A 284-amino-acid polypeptide reads, in one-letter code: UPF0294 protein VV2535 (284 aa).

Belongs to the UPF0294 family.

Its subcellular location is the cytoplasm. The sequence is that of UPF0294 protein VV2535 from Vibrio vulnificus (strain YJ016).